Here is a 262-residue protein sequence, read N- to C-terminus: Small ribosomal subunit protein uS2 (262 aa).

The tract at residues 228–262 (VSNEEVAAEQNIDLDESKEATEAETTEENTSVESN) is disordered.

Belongs to the universal ribosomal protein uS2 family.

The protein is Small ribosomal subunit protein uS2 of Staphylococcus saprophyticus subsp. saprophyticus (strain ATCC 15305 / DSM 20229 / NCIMB 8711 / NCTC 7292 / S-41).